A 401-amino-acid polypeptide reads, in one-letter code: Ufm1-specific protease 2 (401 aa).

Catalysis depends on residues Cys-234, Asp-358, and His-360.

Belongs to the peptidase C78 family.

The protein localises to the endoplasmic reticulum. Its subcellular location is the cytoplasm. It is found in the nucleus. Its function is as follows. Thiol-dependent isopeptidase that specifically cleaves UFM1, a ubiquitin-like modifier protein, from conjugated proteins. While it is also able to mediate the processing of UFM1 precursors, a prerequisite for conjugation reactions, ufsp2 mainly acts as a protein deUFMylase that mediates deconjugation of UFM1 from target proteins. In Danio rerio (Zebrafish), this protein is Ufm1-specific protease 2.